Reading from the N-terminus, the 3387-residue chain is Genome polyprotein (3387 aa).

Residues 1 to 100 lie on the Cytoplasmic side of the membrane; sequence MNQRKKVVRP…LNILNGRKRS (100 aa). A hydrophobic; homodimerization of capsid protein C region spans residues 36 to 71; sequence LFSGKGPLRMVLAFITFLRVLSIPPTAGILKRWGQL. The propeptide at 100-113 is ER anchor for the capsid protein C, removed in mature form by serine protease NS3; that stretch reads STITLLCLIPTVMA. The chain crosses the membrane as a helical span at residues 101–117; the sequence is TITLLCLIPTVMAFSLS. Residues 118-237 lie on the Extracellular side of the membrane; the sequence is TRDGEPLMIV…GAWKHAQRVE (120 aa). The N-linked (GlcNAc...) asparagine; by host glycan is linked to Asn-182. Residues 238–258 traverse the membrane as a helical segment; that stretch reads SWILRNPGFALLAGFMAYMIG. The Cytoplasmic segment spans residues 259-265; sequence QTGIQRT. Residues 266–279 form a helical membrane-spanning segment; it reads VFFVLMMLVAPSYG. The Extracellular portion of the chain corresponds to 280–725; sequence MRCVGVGNRD…HQVFGSVYTT (446 aa). 4 disulfides stabilise this stretch: Cys-282–Cys-309, Cys-339–Cys-400, Cys-353–Cys-384, and Cys-371–Cys-395. Asn-346 carries N-linked (GlcNAc...) asparagine; by host glycosylation. The interval 377 to 390 is fusion peptide; it reads DRGWGNGCGLFGKG. Asn-432 carries N-linked (GlcNAc...) asparagine; by host glycosylation. 2 disulfides stabilise this stretch: Cys-464–Cys-564 and Cys-581–Cys-612. A helical transmembrane segment spans residues 726-746; that stretch reads MFGGVSWMIRILIGFLVLWIG. Residues 747–751 lie on the Cytoplasmic side of the membrane; it reads TNSRN. A helical membrane pass occupies residues 752-772; the sequence is TSMAMTCIAVGGITLFLGFTV. Residues 773 to 1194 lie on the Extracellular side of the membrane; that stretch reads QADMGCVASW…MLGDTMSGRI (422 aa). Cystine bridges form between Cys-778–Cys-789, Cys-829–Cys-917, Cys-953–Cys-997, Cys-1054–Cys-1103, Cys-1065–Cys-1087, and Cys-1086–Cys-1090. Residues Asn-904 and Asn-981 are each glycosylated (N-linked (GlcNAc...) asparagine; by host). Residues 1195–1218 traverse the membrane as a helical segment; sequence GGQIHLAIMAVFKMSPGYVLGVFL. Residues 1219-1224 lie on the Lumenal side of the membrane; it reads RKLTSR. A helical membrane pass occupies residues 1225 to 1243; sequence ETALMVIGMAMTTVLSIPH. Residues 1244-1267 are Cytoplasmic-facing; it reads DLMELIDGISLGLILLKIVTQFDN. Residues 1268–1288 traverse the membrane as a helical segment; sequence TQVGTLALSLTFIRSTMPLVM. Ala-1289 is a topological domain (lumenal). Residues 1290 to 1308 traverse the membrane as a helical segment; the sequence is WRTIMAVLFVVTLIPLCRT. Over 1309–1316 the chain is Lumenal; that stretch reads SCLQKQSH. The chain crosses the membrane as a helical span at residues 1317-1337; it reads WVEITALILGAQALPVYLMTL. The Cytoplasmic segment spans residues 1338-1345; it reads MKGASRRS. A helical transmembrane segment spans residues 1346–1366; sequence WPLNEGIMAVGLVSLLGSALL. At 1367-1369 the chain is on the lumenal side; the sequence is KND. A helical membrane pass occupies residues 1370 to 1390; sequence VPLAGPMVAGGLLLAAYVMSG. Topologically, residues 1391 to 1437 are cytoplasmic; that stretch reads SSADLSLEKAANVQWDEMADITGSSPIIEVKQDEDGSFSIRDVEETN. Positions 1397–1436 are interacts with and activates NS3 protease; sequence LEKAANVQWDEMADITGSSPIIEVKQDEDGSFSIRDVEET. Residues 1438–1458 constitute an intramembrane region (helical); that stretch reads MITLLVKLALITVSGLYPLAI. Topologically, residues 1459–2143 are cytoplasmic; it reads PVTMTLWYMW…QHALNELPES (685 aa). One can recognise a Peptidase S7 domain in the interval 1475–1652; that stretch reads SGALWDVPSP…ERIGEPDYEV (178 aa). Catalysis depends on charge relay system; for serine protease NS3 activity residues His-1525, Asp-1549, and Ser-1609. A Helicase ATP-binding domain is found at 1654 to 1810; sequence EDIFRKKRLT…QSNSPIEDIE (157 aa). The interval 1658 to 1661 is important for RNA-binding; that stretch reads RKKR. An ATP-binding site is contributed by 1667 to 1674; that stretch reads LHPGAGKT. The short motif at 1758–1761 is the DEAH box element; that stretch reads DEAH. Residues 1820–1987 form the Helicase C-terminal domain; sequence TGFDWITDYQ…IIPTLFGPER (168 aa). At Lys-1862 the chain carries N6-acetyllysine; by host. The helical transmembrane segment at 2144–2164 threads the bilayer; it reads LETLMLVALLGAMTAGIFLFF. Over 2165–2169 the chain is Lumenal; it reads MQGKG. Positions 2170–2190 form an intramembrane region, helical; sequence IGKLSMGLITIAVASGLLWVA. Position 2191 (Glu-2191) is a topological domain, lumenal. Residues 2192-2212 traverse the membrane as a helical segment; the sequence is IQPQWIAASIILEFFLMVLLI. Over 2213-2225 the chain is Cytoplasmic; it reads PEPEKQRTPQDNQ. Residues 2226–2246 form a helical membrane-spanning segment; it reads LIYVILTILTIIGLIAANEMG. The Lumenal segment spans residues 2247-2270; it reads LIEKTKTDFGFYQVKTETTILDVD. Residues 2271-2291 constitute an intramembrane region (helical); that stretch reads LRPASAWTLYAVATTILTPML. Over 2292–2301 the chain is Lumenal; the sequence is RHTIENTSAN. Residues Asn-2297 and Asn-2301 are each glycosylated (N-linked (GlcNAc...) asparagine; by host). An intramembrane region (helical) is located at residues 2302–2322; it reads LSLAAIANQAAVLMGLGKGWP. Topologically, residues 2323-2343 are lumenal; that stretch reads LHRMDLGVPLLAMGCYSQVNP. The helical transmembrane segment at 2344–2364 threads the bilayer; that stretch reads TTLTASLVMLLVHYAIIGPGL. The Cytoplasmic segment spans residues 2365–2409; the sequence is QAKATREAQKRTAAGIMKNPTVDGITVIDLEPISYDPKFEKQLGQ. A helical transmembrane segment spans residues 2410-2430; the sequence is VMLLVLCAGQLLLMRTTWAFC. Topologically, residues 2431 to 2455 are lumenal; sequence EVLTLATGPILTLWEGNPGRFWNTT. N-linked (GlcNAc...) asparagine; by host glycosylation is present at Asn-2453. Residues 2456 to 2476 form a helical membrane-spanning segment; that stretch reads IAVSTANIFRGSYLAGAGLAF. Over 2477-3387 the chain is Cytoplasmic; sequence SLIKNAQTPR…SAPSESEGVL (911 aa). The 263-residue stretch at 2489–2751 folds into the mRNA cap 0-1 NS5-type MT domain; the sequence is TGTTGETLGE…DVDLGAGTRS (263 aa). Ser-2543 lines the S-adenosyl-L-methionine pocket. The residue at position 2543 (Ser-2543) is a Phosphoserine. The For 2'-O-MTase activity role is filled by Lys-2548. The SUMO-interacting motif signature appears at 2564–2567; sequence VVDL. S-adenosyl-L-methionine contacts are provided by Gly-2573, Trp-2574, Thr-2591, Lys-2592, Asp-2618, and Val-2619. The For 2'-O-MTase activity role is filled by Asp-2633. S-adenosyl-L-methionine is bound at residue Ile-2634. Catalysis depends on for 2'-O-MTase activity residues Lys-2668 and Glu-2704. Tyr-2706 is a binding site for S-adenosyl-L-methionine. Residues Glu-2925, His-2929, Cys-2934, and Cys-2937 each coordinate Zn(2+). Positions 3016-3166 constitute a RdRp catalytic domain; it reads LMYADDTAGW…PLDERFGTSL (151 aa). Zn(2+) contacts are provided by His-3200, Cys-3216, and Cys-3335.

In the N-terminal section; belongs to the class I-like SAM-binding methyltransferase superfamily. mRNA cap 0-1 NS5-type methyltransferase family. In terms of assembly, homodimer. Interacts (via N-terminus) with host EXOC1 (via C-terminus); this interaction results in EXOC1 degradation through the proteasome degradation pathway. Forms heterodimers with envelope protein E in the endoplasmic reticulum and Golgi. As to quaternary structure, homodimer; in the endoplasmic reticulum and Golgi. Interacts with protein prM. Interacts with non-structural protein 1. In terms of assembly, homodimer; Homohexamer when secreted. Interacts with envelope protein E. Interacts (via N-terminus) with serine protease NS3. As to quaternary structure, forms a heterodimer with serine protease NS3. May form homooligomers. In terms of assembly, forms a heterodimer with NS2B. Interacts with NS4B. Interacts with unphosphorylated RNA-directed RNA polymerase NS5; this interaction stimulates RNA-directed RNA polymerase NS5 guanylyltransferase activity. Interacts with host SHFL. Interacts with host MAVS; this interaction inhibits the synthesis of IFN-beta. Interacts with host SHFL. Interacts with host AUP1; the interaction occurs in the presence of Dengue virus NS4B and induces lipophagy which facilitates production of virus progeny particles. As to quaternary structure, interacts with serine protease NS3. In terms of assembly, homodimer. Interacts with host STAT2; this interaction inhibits the phosphorylation of the latter, and, when all viral proteins are present (polyprotein), targets STAT2 for degradation. Interacts with serine protease NS3. Interacts with host PAF1 complex; the interaction may prevent the recruitment of the PAF1 complex to interferon-responsive genes, and thus reduces the immune response. In terms of processing, specific enzymatic cleavages in vivo yield mature proteins. Cleavages in the lumen of endoplasmic reticulum are performed by host signal peptidase, whereas cleavages in the cytoplasmic side are performed by serine protease NS3. Signal cleavage at the 2K-4B site requires a prior NS3 protease-mediated cleavage at the 4A-2K site. Post-translationally, cleaved in post-Golgi vesicles by a host furin, releasing the mature small envelope protein M, and peptide pr. This cleavage is incomplete as up to 30% of viral particles still carry uncleaved prM. N-glycosylated. In terms of processing, N-glycosylated. The excreted form is glycosylated and this is required for efficient secretion of the protein from infected cells. Post-translationally, acetylated by host KAT5. Acetylation modulates NS3 RNA-binding and unwinding activities and plays an important positive role for viral replication. Sumoylation of RNA-directed RNA polymerase NS5 increases NS5 protein stability allowing proper viral RNA replication. In terms of processing, phosphorylated on serines residues. This phosphorylation may trigger NS5 nuclear localization.

Its subcellular location is the virion. It localises to the host nucleus. The protein localises to the host cytoplasm. The protein resides in the host perinuclear region. It is found in the secreted. Its subcellular location is the virion membrane. It localises to the host endoplasmic reticulum membrane. The protein localises to the host mitochondrion. The enzyme catalyses Selective hydrolysis of -Xaa-Xaa-|-Yaa- bonds in which each of the Xaa can be either Arg or Lys and Yaa can be either Ser or Ala.. The catalysed reaction is RNA(n) + a ribonucleoside 5'-triphosphate = RNA(n+1) + diphosphate. It catalyses the reaction a ribonucleoside 5'-triphosphate + H2O = a ribonucleoside 5'-diphosphate + phosphate + H(+). It carries out the reaction ATP + H2O = ADP + phosphate + H(+). The enzyme catalyses a 5'-end (5'-triphosphoguanosine)-ribonucleoside in mRNA + S-adenosyl-L-methionine = a 5'-end (N(7)-methyl 5'-triphosphoguanosine)-ribonucleoside in mRNA + S-adenosyl-L-homocysteine. The catalysed reaction is a 5'-end (N(7)-methyl 5'-triphosphoguanosine)-ribonucleoside in mRNA + S-adenosyl-L-methionine = a 5'-end (N(7)-methyl 5'-triphosphoguanosine)-(2'-O-methyl-ribonucleoside) in mRNA + S-adenosyl-L-homocysteine + H(+). Functionally, plays a role in virus budding by binding to the cell membrane and gathering the viral RNA into a nucleocapsid that forms the core of a mature virus particle. During virus entry, may induce genome penetration into the host cytoplasm after hemifusion induced by the surface proteins. Can migrate to the cell nucleus where it modulates host functions. Overcomes the anti-viral effects of host EXOC1 by sequestering and degrading the latter through the proteasome degradation pathway. In terms of biological role, regulates the ATPase activity of the NS3 helicase activity. NS4A allows NS3 helicase to conserve energy during unwinding. Plays a role in the inhibition of the host innate immune response. Interacts with host MAVS and thereby prevents the interaction between RIGI and MAVS. In turn, IFN-beta production is impaired. Interacts with host AUP1 which mediates induction of lipophagy in host cells and facilitates production of virus progeny particles. Inhibits RNA silencing by interfering with host Dicer. Its function is as follows. Prevents premature fusion activity of envelope proteins in trans-Golgi by binding to envelope protein E at pH6.0. After virion release in extracellular space, gets dissociated from E dimers. Functionally, acts as a chaperone for envelope protein E during intracellular virion assembly by masking and inactivating envelope protein E fusion peptide. prM is the only viral peptide matured by host furin in the trans-Golgi network probably to avoid catastrophic activation of the viral fusion activity in acidic Golgi compartment prior to virion release. prM-E cleavage is inefficient, and many virions are only partially matured. These uncleaved prM would play a role in immune evasion. In terms of biological role, may play a role in virus budding. Exerts cytotoxic effects by activating a mitochondrial apoptotic pathway through M ectodomain. May display a viroporin activity. Binds to host cell surface receptor and mediates fusion between viral and cellular membranes. Envelope protein is synthesized in the endoplasmic reticulum in the form of heterodimer with protein prM. They play a role in virion budding in the ER, and the newly formed immature particle is covered with 60 spikes composed of heterodimer between precursor prM and envelope protein E. The virion is transported to the Golgi apparatus where the low pH causes dissociation of PrM-E heterodimers and formation of E homodimers. prM-E cleavage is inefficient, and many virions are only partially matured. These uncleaved prM would play a role in immune evasion. Its function is as follows. Involved in immune evasion, pathogenesis and viral replication. Once cleaved off the polyprotein, is targeted to three destinations: the viral replication cycle, the plasma membrane and the extracellular compartment. Essential for viral replication. Required for formation of the replication complex and recruitment of other non-structural proteins to the ER-derived membrane structures. Excreted as a hexameric lipoparticle that plays a role against host immune response. Antagonizing the complement function. Binds to the host macrophages and dendritic cells. Inhibits signal transduction originating from Toll-like receptor 3 (TLR3). Functionally, disrupts the host endothelial glycocalyx layer of host pulmonary microvascular endothelial cells, inducing degradation of sialic acid and shedding of heparan sulfate proteoglycans. NS1 induces expression of sialidases, heparanase, and activates cathepsin L, which activates heparanase via enzymatic cleavage. These effects are probably linked to the endothelial hyperpermeability observed in severe dengue disease. In terms of biological role, component of the viral RNA replication complex that functions in virion assembly and antagonizes the host immune response. Required cofactor for the serine protease function of NS3. May have membrane-destabilizing activity and form viroporins. Its function is as follows. Displays three enzymatic activities: serine protease, NTPase and RNA helicase. NS3 serine protease, in association with NS2B, performs its autocleavage and cleaves the polyprotein at dibasic sites in the cytoplasm: C-prM, NS2A-NS2B, NS2B-NS3, NS3-NS4A, NS4A-2K and NS4B-NS5. NS3 RNA helicase binds RNA and unwinds dsRNA in the 3' to 5' direction. Functionally, functions as a signal peptide for NS4B and is required for the interferon antagonism activity of the latter. In terms of biological role, induces the formation of ER-derived membrane vesicles where the viral replication takes place. Inhibits interferon (IFN)-induced host STAT1 phosphorylation and nuclear translocation, thereby preventing the establishment of cellular antiviral state by blocking the IFN-alpha/beta pathway. Replicates the viral (+) and (-) RNA genome, and performs the capping of genomes in the cytoplasm. NS5 methylates viral RNA cap at guanine N-7 and ribose 2'-O positions. Besides its role in RNA genome replication, also prevents the establishment of cellular antiviral state by blocking the interferon-alpha/beta (IFN-alpha/beta) signaling pathway. Inhibits host TYK2 and STAT2 phosphorylation, thereby preventing activation of JAK-STAT signaling pathway. May reduce immune responses by preventing the recruitment of the host PAF1 complex to interferon-responsive genes. This is Genome polyprotein from Dengue virus type 4 (strain Dominica/814669/1981) (DENV-4).